Consider the following 311-residue polypeptide: 4-hydroxy-tetrahydrodipicolinate synthase (311 aa).

Thr51 provides a ligand contact to pyruvate. Tyr140 functions as the Proton donor/acceptor in the catalytic mechanism. The active-site Schiff-base intermediate with substrate is the Lys168. Ile209 provides a ligand contact to pyruvate.

Belongs to the DapA family. In terms of assembly, homotetramer; dimer of dimers.

It localises to the cytoplasm. It carries out the reaction L-aspartate 4-semialdehyde + pyruvate = (2S,4S)-4-hydroxy-2,3,4,5-tetrahydrodipicolinate + H2O + H(+). Its pathway is amino-acid biosynthesis; L-lysine biosynthesis via DAP pathway; (S)-tetrahydrodipicolinate from L-aspartate: step 3/4. Functionally, catalyzes the condensation of (S)-aspartate-beta-semialdehyde [(S)-ASA] and pyruvate to 4-hydroxy-tetrahydrodipicolinate (HTPA). In Streptococcus pneumoniae (strain Taiwan19F-14), this protein is 4-hydroxy-tetrahydrodipicolinate synthase.